Here is a 771-residue protein sequence, read N- to C-terminus: Hyperosmolality-gated Ca2+ permeable channel 1.2 (771 aa).

Topologically, residues 1–4 are extracellular; the sequence is MATL. A helical transmembrane segment spans residues 5 to 27; sequence QDIGVSAGINILSAFVFFIIFAV. At 28–100 the chain is on the cytoplasmic side; sequence LRLQPFNDRV…AGLDSVVYLR (73 aa). A helical transmembrane segment spans residues 101–125; it reads IYWLGLKIFTPIAVLAWAVLVPVNW. Residues 126 to 156 lie on the Extracellular side of the membrane; that stretch reads TNNTLEMAKQLRNVTSSDIDKLSVSNIPEYS. A helical membrane pass occupies residues 157 to 178; it reads MRFWTHIVMAYAFTIWTCYVLM. Residues 179 to 374 are Cytoplasmic-facing; the sequence is KEYETIANMR…AIPYVSLTVR (196 aa). A helical transmembrane segment spans residues 375–401; the sequence is RLIMHVAFFFLTFFFIVPIAFVQSLAT. Residues 402–419 are Extracellular-facing; it reads IEGIVKAAPFLKFIVDDK. The chain crosses the membrane as a helical span at residues 420–445; that stretch reads FMKSVIQGFLPGIALKLFLAFLPSIL. Residues 446-462 lie on the Cytoplasmic side of the membrane; sequence MIMSKFEGFTSISSLER. Residues 463 to 485 form a helical membrane-spanning segment; the sequence is RAAFRYYIFNLVNVFLASVIAGA. Over 486 to 504 the chain is Extracellular; the sequence is AFEQLNSFLNQSANQIPKT. Residues 505–533 traverse the membrane as a helical segment; sequence IGVAIPMKATFFITYIMVDGWAGVAGEIL. At 534-566 the chain is on the cytoplasmic side; it reads MLKPLIMFHLKNAFLVKTDKDREEAMDPGSIGF. The chain crosses the membrane as a helical span at residues 567 to 588; it reads NTGEPRIQLYFLLGLVYAPVTP. Met589 is a topological domain (extracellular). Residues 590-605 traverse the membrane as a helical segment; it reads LLPFILVFFALAYIVY. Over 606–625 the chain is Cytoplasmic; sequence RHQIINVYNQEYESAAAFWP. A helical transmembrane segment spans residues 626 to 648; it reads DVHGRVIAALVISQLLLMGLLGT. Residues 649–651 lie on the Extracellular side of the membrane; the sequence is KHA. A helical transmembrane segment spans residues 652-670; sequence ALAAPFLIALPVLTIGFHH. Over 671–771 the chain is Cytoplasmic; sequence FCKGRYEPAF…PSLPFSGKLV (101 aa). The segment at 741-771 is disordered; the sequence is PTKRQSRRNTPAPSIISGDDSPSLPFSGKLV.

This sequence belongs to the CSC1 (TC 1.A.17) family. Homodimer.

It is found in the membrane. Its activity is regulated as follows. Activated by hyperosmotic shock after mannitol or NaCl treatment. Activated by mechanical pressure: activated in response to membrane stretch and poke. Membrane lipids play a key role in mechanosensation by acting as a wall mainly formed by lipid head groups. Acts as an osmosensitive calcium-permeable cation channel. Specifically conducts cations including Ca(2+), K(+) and Na(+) in vitro. Inactivation or closure of the channel is calcium-dependent. Mechanosensitive ion channel that converts mechanical stimuli into a flow of ions: activated in response to membrane stretch and poke. The sequence is that of Hyperosmolality-gated Ca2+ permeable channel 1.2 from Arabidopsis thaliana (Mouse-ear cress).